Here is a 114-residue protein sequence, read N- to C-terminus: Monothiol glutaredoxin-S8 (114 aa).

Residues 1–113 (MDRVTRLASQ…PLLRDAGALW (113 aa)) enclose the Glutaredoxin domain. Cys-21 contributes to the [2Fe-2S] cluster binding site.

The protein belongs to the glutaredoxin family. CC-type subfamily.

Its subcellular location is the cytoplasm. May only reduce GSH-thiol disulfides, but not protein disulfides. The protein is Monothiol glutaredoxin-S8 (GRXS8) of Oryza sativa subsp. japonica (Rice).